Here is a 545-residue protein sequence, read N- to C-terminus: CTP synthase (545 aa).

The tract at residues 1–266 is amidoligase domain; the sequence is MTTNYIFVTG…DDYICKRFSL (266 aa). CTP is bound at residue serine 14. A UTP-binding site is contributed by serine 14. ATP contacts are provided by residues 15–20 and aspartate 72; that span reads SLGKGI. The Mg(2+) site is built by aspartate 72 and glutamate 140. CTP is bound by residues 147–149, 187–192, and lysine 223; these read DIE and KTKPTQ. UTP contacts are provided by residues 187 to 192 and lysine 223; that span reads KTKPTQ. An ATP-binding site is contributed by 239–241; that stretch reads KDV. Positions 291–542 constitute a Glutamine amidotransferase type-1 domain; that stretch reads TIGMVGKYIE…VKAASEYQKR (252 aa). Glycine 352 serves as a coordination point for L-glutamine. Catalysis depends on cysteine 379, which acts as the Nucleophile; for glutamine hydrolysis. Residues 380–383, glutamate 403, and arginine 470 each bind L-glutamine; that span reads LGMQ. Active-site residues include histidine 515 and glutamate 517.

Belongs to the CTP synthase family. Homotetramer.

The catalysed reaction is UTP + L-glutamine + ATP + H2O = CTP + L-glutamate + ADP + phosphate + 2 H(+). It carries out the reaction L-glutamine + H2O = L-glutamate + NH4(+). The enzyme catalyses UTP + NH4(+) + ATP = CTP + ADP + phosphate + 2 H(+). The protein operates within pyrimidine metabolism; CTP biosynthesis via de novo pathway; CTP from UDP: step 2/2. With respect to regulation, allosterically activated by GTP, when glutamine is the substrate; GTP has no effect on the reaction when ammonia is the substrate. The allosteric effector GTP functions by stabilizing the protein conformation that binds the tetrahedral intermediate(s) formed during glutamine hydrolysis. Inhibited by the product CTP, via allosteric rather than competitive inhibition. Catalyzes the ATP-dependent amination of UTP to CTP with either L-glutamine or ammonia as the source of nitrogen. Regulates intracellular CTP levels through interactions with the four ribonucleotide triphosphates. The polypeptide is CTP synthase (Cronobacter sakazakii (strain ATCC BAA-894) (Enterobacter sakazakii)).